We begin with the raw amino-acid sequence, 483 residues long: Regulatory protein ViaA (483 aa).

This sequence belongs to the ViaA family. As to quaternary structure, homodimer. Interacts with RavA.

The protein localises to the cytoplasm. In terms of biological role, component of the RavA-ViaA chaperone complex, which may act on the membrane to optimize the function of some of the respiratory chains. ViaA stimulates the ATPase activity of RavA. In Shigella sonnei (strain Ss046), this protein is Regulatory protein ViaA.